We begin with the raw amino-acid sequence, 713 residues long: Polyribonucleotide nucleotidyltransferase (713 aa).

Mg(2+)-binding residues include Asp488 and Asp494. One can recognise a KH domain in the interval 555–614 (PQMEIIKVPTDKIRDVIGSGGKVIRGIVDETGAKVNIDDDGTVQISAMDRKSIDAAIKMI). The S1 motif domain occupies 624-692 (GEIYEGKVVS…ERGKVRLSMK (69 aa)).

The protein belongs to the polyribonucleotide nucleotidyltransferase family. It depends on Mg(2+) as a cofactor.

Its subcellular location is the cytoplasm. It catalyses the reaction RNA(n+1) + phosphate = RNA(n) + a ribonucleoside 5'-diphosphate. Functionally, involved in mRNA degradation. Catalyzes the phosphorolysis of single-stranded polyribonucleotides processively in the 3'- to 5'-direction. This is Polyribonucleotide nucleotidyltransferase from Hyphomonas neptunium (strain ATCC 15444).